The following is a 650-amino-acid chain: Acetyl-coenzyme A synthetase (650 aa).

CoA contacts are provided by residues Arg-191–Arg-194, Thr-311, and Asn-335. ATP contacts are provided by residues Gly-387–Pro-389, Asp-411–Thr-416, Asp-500, and Arg-515. Residue Ser-523 coordinates CoA. Arg-526 lines the ATP pocket. Val-537, His-539, and Val-542 together coordinate Mg(2+). Arg-584 contributes to the CoA binding site. N6-acetyllysine is present on Lys-609.

It belongs to the ATP-dependent AMP-binding enzyme family. Requires Mg(2+) as cofactor. Acetylated. Deacetylation by the SIR2-homolog deacetylase activates the enzyme.

It carries out the reaction acetate + ATP + CoA = acetyl-CoA + AMP + diphosphate. Functionally, catalyzes the conversion of acetate into acetyl-CoA (AcCoA), an essential intermediate at the junction of anabolic and catabolic pathways. AcsA undergoes a two-step reaction. In the first half reaction, AcsA combines acetate with ATP to form acetyl-adenylate (AcAMP) intermediate. In the second half reaction, it can then transfer the acetyl group from AcAMP to the sulfhydryl group of CoA, forming the product AcCoA. This is Acetyl-coenzyme A synthetase from Shewanella oneidensis (strain ATCC 700550 / JCM 31522 / CIP 106686 / LMG 19005 / NCIMB 14063 / MR-1).